The primary structure comprises 769 residues: MDIGKKHVIPKSQYRRKRREFFHNEDREENLNQHQDKQNIDNTTSKKADKQIHKDSIDKHERFKNSLSSHLEQRNRDVNENKAEESKSNQDSKSAYNRDHYLTDDVSKKQNSLDSVDQDTEKSKYYEQNSEATLSTKSTDKVESTEMRKLSSDKNKVGHEEQHVLSKPSEHDKETRIDSESSRTDSDSSMQTEKIKKDSSDGNKSSNLKSEVISDKSNTVPKLSESDDEVNNQKPLTLPEEQKLKRQQSQNEQTKTYTYGDSEQNDKSNHENDLSHHTPSISDDKDNVMRENHIVDDNPDNDINTLSLSKIDDDRKLDEKIHVEDKHKQNADSSETVGYQSQSTASHRSTEKRNISINDHDKLNGQKTNTKTSANNNQKKATSKLNKGRATNNNYSDILKKFWMMYWPKLVILMGIIILIVILNAIFNNVNKNDRMNDNNDADAQKYTTTMKNANNTVKSVVTVENETSKDSSLPKDKASQDEVGSGVVYKKSGDTLYIVTNAHVVGDKENQKITFSNNKSVVGKVLGKDKWSDLAVVKATSSDSSVKEIAIGDSNNLVLGEPILVVGNPLGVDFKGTVTEGIISGLNRNVPIDFDKDNKYDMLMKAFQIDASVNPGNSGGAVVNREGKLIGVVAAKISMPNVENMSFAIPVNEVQKIVKDLETKGKIDYPDVGVKMKNIASLNSFERQAVKLPGKVKNGVVVDQVDNNGLADQSGLKKGDVITELDGKLLEDDLRFRQIIFSHKDDLKSITAKIYRDGKEKEINIKLK.

The segment covering 1–20 has biased composition (basic residues); sequence MDIGKKHVIPKSQYRRKRRE. Disordered stretches follow at residues 1 to 287 and 324 to 390; these read MDIG…DKDN and EDKH…KGRA. 2 stretches are compositionally biased toward basic and acidic residues: residues 21–64 and 71–108; these read FFHN…ERFK and LEQR…DVSK. Polar residues predominate over residues 126–137; that stretch reads YEQNSEATLSTK. Over residues 138 to 186 the composition is skewed to basic and acidic residues; the sequence is STDKVESTEMRKLSSDKNKVGHEEQHVLSKPSEHDKETRIDSESSRTDS. The span at 247 to 262 shows a compositional bias: polar residues; sequence QQSQNEQTKTYTYGDS. A compositionally biased stretch (basic and acidic residues) spans 264 to 287; sequence QNDKSNHENDLSHHTPSISDDKDN. Residues 331–347 are compositionally biased toward polar residues; it reads ADSSETVGYQSQSTASH. Residues 348–364 are compositionally biased toward basic and acidic residues; it reads RSTEKRNISINDHDKLN. Positions 365 to 390 are enriched in polar residues; the sequence is GQKTNTKTSANNNQKKATSKLNKGRA. The helical transmembrane segment at 410 to 430 threads the bilayer; it reads LVILMGIIILIVILNAIFNNV. Active-site charge relay system residues include His504, Asp534, and Ser619. The PDZ domain maps to 680–733; sequence IASLNSFERQAVKLPGKVKNGVVVDQVDNNGLADQSGLKKGDVITELDGKLLED.

The protein belongs to the peptidase S1C family.

It is found in the cell membrane. This chain is Serine protease HtrA-like, found in Staphylococcus aureus (strain N315).